Here is a 308-residue protein sequence, read N- to C-terminus: Thiohydrolase (308 aa).

The protein belongs to the polyketide transferase af380 family.

It functions in the pathway mycotoxin biosynthesis. Thiohydrolase; part of the gene cluster that mediates the biosynthesis of brefeldin A (BFA), a protein transport inhibitor that shows antiviral, antifungal, and antitumor properties. The proposed biosynthesis of BFA involves formation of an acyclic polyketide chain that is differentially tailored throughout the backbone. The highly reducing polyketide synthase Bref-PKS is proposed to synthesize the precisely reduced octaketide precursor, which could then be directly offloaded by the thiohydrolase enzyme Bref-TH followed by a cytochrome P450 monooxygenase-mediated formation of the cyclopentane ring and macrocyclization to afford 7-deoxy BFA. Alternatively, the first ring annulation can also occur on the ACP-tethered intermediate before the thiohydrolase release and lactonization. The C7-hydroxylation by another cytochrome P450 monooxygenase is believed to be the final step in the process to obtain the final structure of BFA. In addition to the HRPKS Bref-PKS and the thiohydrolase Bref-TH, the brefeldin A biosynthesis cluster contains 4 cytochrome p450 monooxygenases (called orf3 to orf6), as well a the probable cluster-specific transcription regulator orf8. The polypeptide is Thiohydrolase (Eupenicillium brefeldianum (Penicillium brefeldianum)).